Reading from the N-terminus, the 405-residue chain is MEEVISASLADIMLAMNGEKFFVENWKVEVTPAALTVVNTSEVPVQDPRCTIITLPFSVWSAMECMLCRFQPANQLHVACKLFDTTFILQNQDLDQSRYVVVETVVSDLKKPISFSLVSEGRALAEGELRLVLTPLRALDYVHVFSVIYNMHNELPPGLELASVTEYCGSLVKELCGTAIRTRANTYTMAFKWEGARQFYRVTNSYFCEQYNRFKIVRLCVKECKMYRKEGNVHVLDITVVGDTQPEMVHGVVSVMGAEVDSMLVTDRYISPLYNQAWGWALPLYAPTQVVVPPKKTLKVPVDGMFFRGTVPGAQPVCLIGGSNINPDLVVRPVVWKPMTSLVLTLYNNSERPLAIRRGDLAALAVPVNSTDIRTVYSDNSGTLITWDTGTCEPVEQEEEEEARA.

This is an uncharacterized protein from Equine herpesvirus 2 (strain 86/87) (EHV-2).